The sequence spans 307 residues: Ornithine carbamoyltransferase (307 aa).

Residues 53–56, Q80, R104, and 131–134 each bind carbamoyl phosphate; these read STRT and HPCQ. L-ornithine is bound by residues N162, D220, and 224–225; that span reads SM. Carbamoyl phosphate contacts are provided by residues 260–261 and R288; that span reads CL.

It belongs to the aspartate/ornithine carbamoyltransferase superfamily. OTCase family.

It localises to the cytoplasm. It carries out the reaction carbamoyl phosphate + L-ornithine = L-citrulline + phosphate + H(+). The protein operates within amino-acid biosynthesis; L-arginine biosynthesis; L-arginine from L-ornithine and carbamoyl phosphate: step 1/3. Functionally, reversibly catalyzes the transfer of the carbamoyl group from carbamoyl phosphate (CP) to the N(epsilon) atom of ornithine (ORN) to produce L-citrulline. The chain is Ornithine carbamoyltransferase from Nitrosomonas eutropha (strain DSM 101675 / C91 / Nm57).